We begin with the raw amino-acid sequence, 305 residues long: Mat- sexual cell fertilization-promoting factor (305 aa).

The alpha box DNA-binding region spans 38-93 (PAKKKVNGFMGYRSYYSSMFSQLPQKERSPILTTLWQQDPFHKEWDFMCAVYSAIR).

This sequence belongs to the MATALPHA1 family.

It is found in the nucleus. Functionally, controls fertilization, probably by determining the mating type. May be involved in the post-fertilization steps of the sexual cycle besides mat+. It is required for the developmental events that occur in the female organ after fertilization. The chain is Mat- sexual cell fertilization-promoting factor (FMR1) from Podospora anserina (Pleurage anserina).